Consider the following 196-residue polypeptide: Probable malonic semialdehyde reductase RutE (196 aa).

The protein belongs to the nitroreductase family. HadB/RutE subfamily. It depends on FMN as a cofactor.

It carries out the reaction 3-hydroxypropanoate + NADP(+) = 3-oxopropanoate + NADPH + H(+). Its function is as follows. May reduce toxic product malonic semialdehyde to 3-hydroxypropionic acid, which is excreted. The protein is Probable malonic semialdehyde reductase RutE of Escherichia coli O8 (strain IAI1).